The sequence spans 424 residues: G1/S-specific cyclin-E (424 aa).

The interval 1–25 (MSRRSGRLQSRQDNQPLTECISDEN) is disordered. Positions 7–17 (RLQSRQDNQPL) are enriched in polar residues. Thr411 carries the post-translational modification Phosphothreonine.

Belongs to the cyclin family. Cyclin E subfamily. In terms of assembly, interacts with a member of the CDK2/CDK protein kinases to form a serine/threonine kinase holoenzyme complex. The cyclin subunit imparts substrate specificity to the complex.

It localises to the nucleus. Its function is as follows. Essential for the control of the cell cycle at the G1/S (start) transition. The polypeptide is G1/S-specific cyclin-E (CYCE) (Hemicentrotus pulcherrimus (Sea urchin)).